A 713-amino-acid chain; its full sequence is Signal transducer and activator of transcription 1 (713 aa).

The 98-residue stretch at 477-574 (WCIGFISKHD…EEMLRYFESE (98 aa)) folds into the SH2 domain.

It belongs to the transcription factor STAT family. As to quaternary structure, forms a homodimer or a heterodimer with a related family member.

The protein resides in the cytoplasm. It localises to the nucleus. Functionally, carries out a dual function: signal transduction and activation of transcription. Activated STAT proteins play a role in repression of dauer formation. Neuronal expression is held in check by negative signals through the TGF-beta pathway that target the daf-3 transcription factor. The protein is Signal transducer and activator of transcription 1 of Caenorhabditis briggsae.